A 156-amino-acid polypeptide reads, in one-letter code: Ribosomal RNA large subunit methyltransferase H (156 aa).

S-adenosyl-L-methionine-binding positions include L73, G104, and 123–128 (ISSMTL).

The protein belongs to the RNA methyltransferase RlmH family. In terms of assembly, homodimer.

Its subcellular location is the cytoplasm. It carries out the reaction pseudouridine(1915) in 23S rRNA + S-adenosyl-L-methionine = N(3)-methylpseudouridine(1915) in 23S rRNA + S-adenosyl-L-homocysteine + H(+). Specifically methylates the pseudouridine at position 1915 (m3Psi1915) in 23S rRNA. The chain is Ribosomal RNA large subunit methyltransferase H from Burkholderia multivorans (strain ATCC 17616 / 249).